The primary structure comprises 345 residues: Anthranilate phosphoribosyltransferase (345 aa).

5-phospho-alpha-D-ribose 1-diphosphate contacts are provided by residues glycine 86, 89 to 90 (GD), threonine 94, 96 to 99 (NIST), 114 to 122 (KHGNRNLSS), and alanine 126. Position 86 (glycine 86) interacts with anthranilate. Serine 98 contacts Mg(2+). Anthranilate is bound at residue asparagine 117. Arginine 172 is an anthranilate binding site. 2 residues coordinate Mg(2+): aspartate 231 and glutamate 232.

It belongs to the anthranilate phosphoribosyltransferase family. Homodimer. It depends on Mg(2+) as a cofactor.

The catalysed reaction is N-(5-phospho-beta-D-ribosyl)anthranilate + diphosphate = 5-phospho-alpha-D-ribose 1-diphosphate + anthranilate. Its pathway is amino-acid biosynthesis; L-tryptophan biosynthesis; L-tryptophan from chorismate: step 2/5. In terms of biological role, catalyzes the transfer of the phosphoribosyl group of 5-phosphorylribose-1-pyrophosphate (PRPP) to anthranilate to yield N-(5'-phosphoribosyl)-anthranilate (PRA). The polypeptide is Anthranilate phosphoribosyltransferase (Jannaschia sp. (strain CCS1)).